Here is a 609-residue protein sequence, read N- to C-terminus: Zinc metalloproteinase-disintegrin-like VAP2B (609 aa).

An N-terminal signal peptide occupies residues 1–20 (MIQVLLVTICLAAFPYQGSS). The propeptide occupies 21–189 (IILESGNVND…KKASQLVVTA (169 aa)). Glu-190 is subject to Pyrrolidone carboxylic acid (Glu). Residues 198–393 (RFVELFLVVD…HNPECILNEP (196 aa)) enclose the Peptidase M12B domain. The Ca(2+) site is built by Glu-201 and Asp-285. 3 cysteine pairs are disulfide-bonded: Cys-308/Cys-388, Cys-348/Cys-372, and Cys-350/Cys-355. His-333 contributes to the Zn(2+) binding site. The active site involves Glu-334. Residues His-337 and His-343 each coordinate Zn(2+). N-linked (GlcNAc...) asparagine glycosylation is present at Asn-371. Cys-388, Asn-391, Val-403, Asn-406, Leu-408, Glu-410, Glu-413, and Asp-416 together coordinate Ca(2+). One can recognise a Disintegrin domain in the interval 401 to 487 (PPVCGNELLE…ECPADVFHKN (87 aa)). Cystine bridges form between Cys-404-Cys-423, Cys-404-Cys-433, Cys-415-Cys-428, Cys-415-Cys-433, Cys-417-Cys-423, Cys-427-Cys-450, Cys-441-Cys-447, Cys-446-Cys-472, Cys-459-Cys-479, Cys-466-Cys-491, Cys-466-Cys-498, Cys-491-Cys-503, Cys-498-Cys-503, Cys-510-Cys-525, Cys-510-Cys-560, Cys-525-Cys-571, Cys-538-Cys-548, Cys-548-Cys-555, Cys-555-Cys-597, Cys-560-Cys-571, Cys-591-Cys-602, and Cys-597-Cys-602. The tract at residues 459–472 (CRASMSECDPAEHC) is inhibits platelet aggregation. Residues 465 to 467 (ECD) carry the D/ECD-tripeptide motif. Ca(2+) contacts are provided by Asp-467, Pro-468, Glu-470, Asp-482, and Val-483.

Belongs to the venom metalloproteinase (M12B) family. P-III subfamily. P-IIIb sub-subfamily. Monomer or heterodimer; non-covalently linked. Interacts with fibrillar collagen. Zn(2+) serves as cofactor. The N-terminus is blocked. In terms of tissue distribution, expressed by the venom gland.

It localises to the secreted. Functionally, zinc metalloprotease that abolishes platelet aggregation induced by collagen, but has no effect on platelet aggregation induced by ADP or thromboxane analog. This inhibition may be due to its ability to bind collagen and block the binding site on collagen for platelets and/or to its ability to bind to the platelet alpha-2/beta-1 collagen receptor (ITGA2/ITGB1) to block its interaction with collagen and hence prevent platelet stimulation. Abolishes platelet aggregation induced by collagen (IC(50)=66 nM) but not ADP-stimulated platelet aggregation. This inhibition may be due to its ability to bind collagen and block the binding site on collagen for platelets and/or to its ability to bind to the platelet alpha-2/beta-1 collagen receptor (ITGA2/ITGB1) to block its interaction with collagen and hence prevent platelet stimulation. In Crotalus atrox (Western diamondback rattlesnake), this protein is Zinc metalloproteinase-disintegrin-like VAP2B.